Consider the following 181-residue polypeptide: Cyclic AMP-dependent transcription factor ATF-3 (181 aa).

A Glycyl lysine isopeptide (Lys-Gly) (interchain with G-Cter in SUMO2) cross-link involves residue Lys-78. Positions 86 to 149 constitute a bZIP domain; it reads DERKKRRRER…QHLIYMLNLH (64 aa). Residues 88 to 110 form a basic motif region; the sequence is RKKRRRERNKIAAAKCRNKKKEK. Positions 114-142 are leucine-zipper; it reads LQKESEKLESVNAELKAQIEELKNEKQHL. Thr-162 bears the Phosphothreonine mark. Residue Lys-175 forms a Glycyl lysine isopeptide (Lys-Gly) (interchain with G-Cter in SUMO2) linkage.

Belongs to the bZIP family. ATF subfamily. As to quaternary structure, binds DNA as a homodimer or a heterodimer. Interacts with KAT5; promoting KAT5 autoacetylation and KAT5 deubiquitination by USP7.

The protein resides in the nucleus. Its function is as follows. This protein binds the cAMP response element (CRE) (consensus: 5'-GTGACGT[AC][AG]-3'), a sequence present in many viral and cellular promoters. Represses transcription from promoters with ATF sites. It may repress transcription by stabilizing the binding of inhibitory cofactors at the promoter. In terms of biological role, activates transcription presumably by sequestering inhibitory cofactors away from the promoters. Functionally, stress-induced isoform, counteracts the transcriptional repression of isoform 1. The chain is Cyclic AMP-dependent transcription factor ATF-3 from Homo sapiens (Human).